Reading from the N-terminus, the 232-residue chain is 5'-methylthioadenosine/S-adenosylhomocysteine nucleosidase (232 aa).

The Proton acceptor role is filled by glutamate 12. Substrate contacts are provided by residues glycine 78, isoleucine 152, and 173–174 (ME). The Proton donor role is filled by aspartate 197.

It belongs to the PNP/UDP phosphorylase family. MtnN subfamily. Homodimer.

It carries out the reaction S-adenosyl-L-homocysteine + H2O = S-(5-deoxy-D-ribos-5-yl)-L-homocysteine + adenine. The enzyme catalyses S-methyl-5'-thioadenosine + H2O = 5-(methylsulfanyl)-D-ribose + adenine. It catalyses the reaction 5'-deoxyadenosine + H2O = 5-deoxy-D-ribose + adenine. Its pathway is amino-acid biosynthesis; L-methionine biosynthesis via salvage pathway; S-methyl-5-thio-alpha-D-ribose 1-phosphate from S-methyl-5'-thioadenosine (hydrolase route): step 1/2. Functionally, catalyzes the irreversible cleavage of the glycosidic bond in both 5'-methylthioadenosine (MTA) and S-adenosylhomocysteine (SAH/AdoHcy) to adenine and the corresponding thioribose, 5'-methylthioribose and S-ribosylhomocysteine, respectively. Also cleaves 5'-deoxyadenosine, a toxic by-product of radical S-adenosylmethionine (SAM) enzymes, into 5-deoxyribose and adenine. Thus, is required for in vivo function of the radical SAM enzymes biotin synthase and lipoic acid synthase, that are inhibited by 5'-deoxyadenosine accumulation. The sequence is that of 5'-methylthioadenosine/S-adenosylhomocysteine nucleosidase from Cronobacter sakazakii (strain ATCC BAA-894) (Enterobacter sakazakii).